The chain runs to 188 residues: Apolipoprotein M (188 aa).

The not cleaved signal peptide spans 1–22 (MFHQIWAALLYFYGIILNSIYQ). 3 cysteine pairs are disulfide-bonded: C23–C167, C95–C183, and C128–C157. N135 carries an N-linked (GlcNAc...) asparagine glycan. Tetradecanoate-binding residues include E136 and R143.

Belongs to the calycin superfamily. Lipocalin family. Highly divergent. Interacts with LRP2; LRP2 mediates APOM renal uptake and subsequent lysosomal degradation.

It is found in the secreted. Its function is as follows. Probably involved in lipid transport. Can bind sphingosine-1-phosphate, myristic acid, palmitic acid and stearic acid, retinol, all-trans-retinoic acid and 9-cis-retinoic acid. The chain is Apolipoprotein M (APOM) from Pongo abelii (Sumatran orangutan).